The sequence spans 303 residues: Endo-1,3;1,4-beta-D-glucanase (303 aa).

An N-terminal signal peptide occupies residues 1–43; that stretch reads MPSSAQVLLCLAAVLAAAAATTAEAHSQCLDNPPDRSIHGRQL. N-linked (GlcNAc...) asparagine glycans are attached at residues Asn-115, Asn-197, and Asn-257.

In terms of processing, glycosylated.

The protein resides in the secreted. Its function is as follows. Plays a role in control of plant growth. Mediates specific degradation of cell wall (1,3)(1,4)-beta-D-glucans and is related to auxin-mediated growth and development of cereal coleoptiles. The sequence is that of Endo-1,3;1,4-beta-D-glucanase from Zea mays (Maize).